Here is a 129-residue protein sequence, read N- to C-terminus: Protein Turandot C (129 aa).

A signal peptide spans 1 to 21 (MNASISLLCLALLLISPFCLG).

This sequence belongs to the Turandot family.

The protein localises to the secreted. A humoral factor that may play a role in stress tolerance. In Drosophila melanogaster (Fruit fly), this protein is Protein Turandot C.